A 75-amino-acid chain; its full sequence is UPF0352 protein YejL (75 aa).

The protein belongs to the UPF0352 family.

In Salmonella agona (strain SL483), this protein is UPF0352 protein YejL.